Reading from the N-terminus, the 270-residue chain is MNVEKLKKMKGKEKIVMVTAYDAPSARIARDAGIDVILVGDSLGNNVLGYENTIPVTMEEMLIHVAAVKRGAPDAFIVADMPFLSYQTSVEKAVENAGKFLKVGANAVKIEGGEEFGELVQKLVESGIPVMGHIGLTPQFVNRFGGYRVQGKTEKNREYLLRSARELEKRGAFAIVLELVVEEVAKEITESVSIPTIGIGSGRFCDGQVLVWHDLLGLNPDFAPRFSKKYANLYEVILKALQEFRREVKEGLFPTEEHSFTDKSKGGVSS.

Mg(2+) is bound by residues Asp41 and Asp80. Residues 41 to 42 (DS), Asp80, and Lys109 each bind 3-methyl-2-oxobutanoate. Position 111 (Glu111) interacts with Mg(2+). Catalysis depends on Glu178, which acts as the Proton acceptor.

Belongs to the PanB family. In terms of assembly, homodecamer; pentamer of dimers. Mg(2+) serves as cofactor.

The protein resides in the cytoplasm. It carries out the reaction 3-methyl-2-oxobutanoate + (6R)-5,10-methylene-5,6,7,8-tetrahydrofolate + H2O = 2-dehydropantoate + (6S)-5,6,7,8-tetrahydrofolate. It functions in the pathway cofactor biosynthesis; (R)-pantothenate biosynthesis; (R)-pantoate from 3-methyl-2-oxobutanoate: step 1/2. Catalyzes the reversible reaction in which hydroxymethyl group from 5,10-methylenetetrahydrofolate is transferred onto alpha-ketoisovalerate to form ketopantoate. This is 3-methyl-2-oxobutanoate hydroxymethyltransferase from Thermotoga sp. (strain RQ2).